A 74-amino-acid polypeptide reads, in one-letter code: Protein YkgV (74 aa).

The protein is Protein YkgV of Escherichia coli (strain K12).